Consider the following 158-residue polypeptide: Lysozyme C (158 aa).

The first 18 residues, 1–18 (MRVLPLALLVGLLAVSDA), serve as a signal peptide directing secretion. The C-type lysozyme domain maps to 19-150 (KVLGKCEFAR…DQYMAECWSR (132 aa)). Intrachain disulfides connect Cys-24/Cys-147, Cys-46/Cys-135, Cys-80/Cys-93, and Cys-89/Cys-107. Catalysis depends on residues Glu-51 and Asp-68.

It belongs to the glycosyl hydrolase 22 family. Monomer. As to expression, strongly expressed in gill and gonad, and marginally detectable in hemolymph and lymphoid organ. Not expressed in kidney, hepatopancreas or tail muscle.

The protein resides in the secreted. It carries out the reaction Hydrolysis of (1-&gt;4)-beta-linkages between N-acetylmuramic acid and N-acetyl-D-glucosamine residues in a peptidoglycan and between N-acetyl-D-glucosamine residues in chitodextrins.. Its function is as follows. Lysozymes have primarily a bacteriolytic function; those in tissues and body fluids are associated with the monocyte-macrophage system and enhance the activity of immunoagents. Has bacteriolytic activity against Gram-positive bacterium M.luteus, and Gram-negative shrimp pathogenic bacteria V.alginolyticus, V.parahaemolyticus and V.vulnificus. May play a role in host defense. The sequence is that of Lysozyme C from Penaeus merguiensis (Banana prawn).